The following is a 213-amino-acid chain: Ribosomal RNA small subunit methyltransferase G (213 aa).

S-adenosyl-L-methionine is bound by residues Gly-77, Met-82, 104-106, and Arg-145; that span reads EKS.

Belongs to the methyltransferase superfamily. RNA methyltransferase RsmG family.

It localises to the cytoplasm. The enzyme catalyses guanosine(527) in 16S rRNA + S-adenosyl-L-methionine = N(7)-methylguanosine(527) in 16S rRNA + S-adenosyl-L-homocysteine. In terms of biological role, specifically methylates the N7 position of guanine in position 527 of 16S rRNA. The protein is Ribosomal RNA small subunit methyltransferase G of Pelagibacter ubique (strain HTCC1062).